The sequence spans 402 residues: NADH-quinone oxidoreductase subunit D (402 aa).

Belongs to the complex I 49 kDa subunit family. As to quaternary structure, NDH-1 is composed of 14 different subunits. Subunits NuoB, C, D, E, F, and G constitute the peripheral sector of the complex.

Its subcellular location is the cell inner membrane. It carries out the reaction a quinone + NADH + 5 H(+)(in) = a quinol + NAD(+) + 4 H(+)(out). In terms of biological role, NDH-1 shuttles electrons from NADH, via FMN and iron-sulfur (Fe-S) centers, to quinones in the respiratory chain. The immediate electron acceptor for the enzyme in this species is believed to be ubiquinone. Couples the redox reaction to proton translocation (for every two electrons transferred, four hydrogen ions are translocated across the cytoplasmic membrane), and thus conserves the redox energy in a proton gradient. The chain is NADH-quinone oxidoreductase subunit D from Rhodopseudomonas palustris (strain ATCC BAA-98 / CGA009).